The chain runs to 336 residues: MLVLGVESTAHTFSIGVVKDGVVLGQLGKTYIPPGGGGIHPREAAEHHARVAPSILRQLLGQLGVGLSDIGAVAYAAGPGLGPALRVGAVLARALAIRLGVPVVPVHHGVAHIEVARYATGACDPLVVLISGGHTVVAGYSDGRYRVFGETLDVAIGNAIDMFAREVGLGFPGVPAVEKCAESAETVVPFPMPIVGQDLSYAGLATHALQLVKRGVPLPVVCRSLVETAYYMLAEVVERALAYTRKREVVVAGGVARSRRLKEILRAVGEEHGAVVKVVPDEYAGDNGAMIALTGYYAYRRGVYTTPEGSFVRQRWRLDSVDVPWFRDLCPVTTYI.

2 residues coordinate Fe cation: His-108 and His-112. Substrate-binding positions include 129–133 (LISGG), Asp-161, Glu-178, and Ser-258. A Fe cation-binding site is contributed by Asp-286.

Belongs to the KAE1 / TsaD family. Fe(2+) serves as cofactor.

It is found in the cytoplasm. The catalysed reaction is L-threonylcarbamoyladenylate + adenosine(37) in tRNA = N(6)-L-threonylcarbamoyladenosine(37) in tRNA + AMP + H(+). Functionally, required for the formation of a threonylcarbamoyl group on adenosine at position 37 (t(6)A37) in tRNAs that read codons beginning with adenine. Is probably involved in the transfer of the threonylcarbamoyl moiety of threonylcarbamoyl-AMP (TC-AMP) to the N6 group of A37. The sequence is that of tRNA N6-adenosine threonylcarbamoyltransferase from Pyrobaculum neutrophilum (strain DSM 2338 / JCM 9278 / NBRC 100436 / V24Sta) (Thermoproteus neutrophilus).